A 106-amino-acid chain; its full sequence is Hydrogenase expression/formation protein HoxL (106 aa).

Belongs to the HupF/HypC family.

The chain is Hydrogenase expression/formation protein HoxL (hoxL) from Azotobacter vinelandii.